The sequence spans 410 residues: Na(+)/H(+) antiporter NhaS4 (410 aa).

The next 11 helical transmembrane spans lie at leucine 7–phenylalanine 27, proline 33–leucine 53, phenylalanine 69–leucine 89, valine 107–leucine 127, phenylalanine 135–alanine 155, leucine 173–valine 193, isoleucine 199–leucine 219, leucine 241–isoleucine 261, phenylalanine 291–glycine 311, tryptophan 319–valine 339, and glycine 376–isoleucine 396.

This sequence belongs to the monovalent cation:proton antiporter 2 (CPA2) transporter (TC 2.A.37) family.

It is found in the membrane. Na(+)/H(+) antiporter. This chain is Na(+)/H(+) antiporter NhaS4 (nhaS4), found in Synechocystis sp. (strain ATCC 27184 / PCC 6803 / Kazusa).